The sequence spans 477 residues: UDP-N-acetylmuramate--L-alanine ligase (477 aa).

112–118 (GTHGKTT) is a binding site for ATP.

Belongs to the MurCDEF family.

The protein localises to the cytoplasm. It catalyses the reaction UDP-N-acetyl-alpha-D-muramate + L-alanine + ATP = UDP-N-acetyl-alpha-D-muramoyl-L-alanine + ADP + phosphate + H(+). Its pathway is cell wall biogenesis; peptidoglycan biosynthesis. Functionally, cell wall formation. The sequence is that of UDP-N-acetylmuramate--L-alanine ligase from Verminephrobacter eiseniae (strain EF01-2).